A 344-amino-acid chain; its full sequence is Putative glycosyltransferase EpsH (344 aa).

The protein belongs to the glycosyltransferase 2 family.

May be involved in the production of the exopolysaccharide (EPS) component of the extracellular matrix during biofilm formation. EPS is responsible for the adhesion of chains of cells into bundles. Required for biofilm maintenance. This Bacillus subtilis (strain 168) protein is Putative glycosyltransferase EpsH (epsH).